Reading from the N-terminus, the 122-residue chain is Large ribosomal subunit protein uL14 (122 aa).

It belongs to the universal ribosomal protein uL14 family. In terms of assembly, part of the 50S ribosomal subunit. Forms a cluster with proteins L3 and L19. In the 70S ribosome, L14 and L19 interact and together make contacts with the 16S rRNA in bridges B5 and B8.

In terms of biological role, binds to 23S rRNA. Forms part of two intersubunit bridges in the 70S ribosome. In Fusobacterium nucleatum subsp. nucleatum (strain ATCC 25586 / DSM 15643 / BCRC 10681 / CIP 101130 / JCM 8532 / KCTC 2640 / LMG 13131 / VPI 4355), this protein is Large ribosomal subunit protein uL14.